We begin with the raw amino-acid sequence, 47 residues long: Large ribosomal subunit protein bL34 (47 aa).

This sequence belongs to the bacterial ribosomal protein bL34 family.

In Mycobacterium tuberculosis (strain ATCC 25177 / H37Ra), this protein is Large ribosomal subunit protein bL34.